A 288-amino-acid chain; its full sequence is Cyclin-dependent kinase 2 homolog (288 aa).

The 281-residue stretch at 4-284 folds into the Protein kinase domain; it reads YHGLEKIGEG…AKEALQHAYF (281 aa). ATP contacts are provided by residues 10 to 18 and Lys-32; that span reads IGEGTYGVV. Thr-14 carries the post-translational modification Phosphothreonine. Tyr-15 carries the phosphotyrosine modification. The active-site Proton acceptor is the Asp-125. Phosphothreonine is present on Thr-158.

Belongs to the protein kinase superfamily. CMGC Ser/Thr protein kinase family. CDC2/CDKX subfamily. In terms of assembly, may form a complex composed of at least the catalytic subunit CRK2 and a cyclin. Mg(2+) is required as a cofactor.

Its subcellular location is the cytoplasm. The enzyme catalyses L-seryl-[protein] + ATP = O-phospho-L-seryl-[protein] + ADP + H(+). It catalyses the reaction L-threonyl-[protein] + ATP = O-phospho-L-threonyl-[protein] + ADP + H(+). The catalysed reaction is [DNA-directed RNA polymerase] + ATP = phospho-[DNA-directed RNA polymerase] + ADP + H(+). With respect to regulation, phosphorylation at Thr-14 or Tyr-15 inactivates the enzyme, while phosphorylation at Thr-158 activates it. Functionally, serine/threonine-protein kinase. Involved in the control of the cell cycle. Required for entry into S-phase and mitosis. Probable component of the kinase complex that phosphorylates the repetitive C-terminus of RNA polymerase II. This chain is Cyclin-dependent kinase 2 homolog, found in Plasmodium knowlesi (strain H).